Reading from the N-terminus, the 720-residue chain is Methionine--tRNA ligase (720 aa).

A 'HIGH' region motif is present at residues 27-37; the sequence is PYANGQIHIGH. Zn(2+) is bound by residues Cys-158, Cys-161, Cys-171, and Cys-174. Residues 348–352 carry the 'KMSKS' region motif; that stretch reads KMSKS. ATP is bound at residue Lys-351. The region spanning 614-720 is the tRNA-binding domain; that stretch reads DFAKVDLRIA…SGAKPGMRVK (107 aa).

It belongs to the class-I aminoacyl-tRNA synthetase family. MetG type 1 subfamily. In terms of assembly, homodimer. It depends on Zn(2+) as a cofactor.

Its subcellular location is the cytoplasm. The enzyme catalyses tRNA(Met) + L-methionine + ATP = L-methionyl-tRNA(Met) + AMP + diphosphate. Its function is as follows. Is required not only for elongation of protein synthesis but also for the initiation of all mRNA translation through initiator tRNA(fMet) aminoacylation. This chain is Methionine--tRNA ligase, found in Burkholderia ambifaria (strain MC40-6).